Consider the following 248-residue polypeptide: tRNA N(3)-methylcytidine methyltransferase trm141 (248 aa).

S-adenosyl-L-methionine-binding residues include tryptophan 23, tyrosine 27, glycine 63, aspartate 86, aspartate 112, and isoleucine 133.

Belongs to the methyltransferase superfamily. METL family.

It localises to the cytoplasm. The protein localises to the nucleus. It carries out the reaction cytidine(32) in tRNA(Ser) + S-adenosyl-L-methionine = N(3)-methylcytidine(32) in tRNA(Ser) + S-adenosyl-L-homocysteine + H(+). Its function is as follows. S-adenosyl-L-methionine-dependent methyltransferase that mediates N(3)-methylcytidine modification of residue 32 of the tRNA anticodon loop of tRNA(Ser). N(3)-methylcytidine methylation by trm141 requires the formation of N(6)-dimethylallyladenosine(37) (i6A37) by tit1 as prerequisite. Does not catalyze N(3)-methylcytidine modification of tRNA(Thr). The protein is tRNA N(3)-methylcytidine methyltransferase trm141 of Schizosaccharomyces pombe (strain 972 / ATCC 24843) (Fission yeast).